A 1836-amino-acid polypeptide reads, in one-letter code: InaD-like protein (1836 aa).

The region spanning 1–65 is the L27 domain; the sequence is MPENPAAEKM…SIKQLKGQLS (65 aa). PDZ domains follow at residues 134–221, 248–328, and 365–453; these read YIDI…AREV, DVEL…ARDP, and NVEL…VRRK. Phosphoserine is present on residues S455, S459, and S482. Over residues 456-466 the composition is skewed to polar residues; that stretch reads LSASPFEQPSS. Positions 456–492 are disordered; sequence LSASPFEQPSSREAVAEPPEVPELTGSLKPETNSRME. The 87-residue stretch at 555 to 641 folds into the PDZ 4 domain; it reads DEELQKYSKL…PFTLVCCRRL (87 aa). At S647 the chain carries Phosphoserine. 2 PDZ domains span residues 687-773 and 1074-1166; these read TVEL…ICKP and PRIV…VVQS. Polar residues predominate over residues 1173–1191; it reads VIPSVNNKGKTPPQNQDQN. Residues 1173-1232 form a disordered region; sequence VIPSVNNKGKTPPQNQDQNTQEKKAKRHGTAPPPMKLPPPYRAPSADTEESEEDSALTDK. Pro residues predominate over residues 1203-1214; it reads APPPMKLPPPYR. A Phosphoserine modification is found at S1217. Residues 1219–1228 are compositionally biased toward acidic residues; it reads DTEESEEDSA. The region spanning 1245–1328 is the PDZ 7 domain; that stretch reads LHIIELEKDK…PTRVKLVFIR (84 aa). Positions 1341–1448 are disordered; that stretch reads FPVPSHSPSP…ADVTGSGNFQ (108 aa). Residues 1372–1383 show a composition bias toward basic and acidic residues; the sequence is PLPERESSKPED. Polar residues-rich tracts occupy residues 1415–1426 and 1434–1448; these read YSAQVSSSSQEI and CQST…GNFQ. 2 consecutive PDZ domains span residues 1472–1555 and 1568–1650; these read EMII…VIYR and VFLV…EIGR. T1545 is modified (phosphothreonine). Positions 1657–1678 are disordered; it reads ASSRKTSQNSQGDQHSAHSSCR. A PDZ 10 domain is found at 1709-1795; that stretch reads PRTVEIIREL…FGRIILQVVA (87 aa). Positions 1813 to 1836 are disordered; the sequence is SQLGSPTADRHPQDPEELLQRTAD.

Forms a ternary complex with PALS1 and CRB1. Component of a complex whose core is composed of ARHGAP17, AMOT, PALS1, INADL/PATJ and PARD3/PAR3. Forms a heterotrimeric complex composed of MMP5, LIN7B and PATJ; the N-terminal L27 domain of PALS1 interacts with the L27 domain of PATJ and the C-terminal L27 domain of PALS1 interacts with the L27 domain of LIN7B. Component of a complex composed of CRB3, PALS1 and PATJ. As part of the Crumbs complex; interacts with WWP1, the interaction is enhanced by AMOTL2 and facilitates WWP1 localization to the plasma membrane. The Crumbs complex promotes monoubiquitination of AMOTL2 by WWP1, which activates the Hippo signaling pathway. Interacts (via N-terminus) with PALS1/PALS (via PDZ domain). Interacts with TJP3/ZO-3 and CLDN1/claudin-1. Interacts with ASIC3, KCNJ10, KCNJ15, GRIN2A, GRIN2B, GRIN2C, GRIN2D, NLGN2, and HTR2A. Interacts with MPP7. Directly interacts with HTR4. Interacts (via PDZ domain 8) with WWC1 (via the ADDV motif). Interacts with SLC6A4. Interacts (via C-terminus) with ARHGEF18. Interacts with NPHP1. Interacts with PARD3/PAR3. Interacts (via PDZ1-6 domains) with TJP1/ZO1; the interaction is required for attachment and extension of TJP1/ZO1 condensates along the apical cell interface. In terms of tissue distribution, abundantly expressed in germ cells, also expressed in testes and seminiferous tubules, with faint expression in Sertoli cells (at protein level).

The protein resides in the cell junction. It is found in the tight junction. It localises to the apical cell membrane. Its subcellular location is the cytoplasm. The protein localises to the perinuclear region. In terms of biological role, scaffolding protein that facilitates the localization of proteins to the cell membrane. Required for the correct formation of tight junctions and epithelial apico-basal polarity. Acts (via its L27 domain) as an apical connector and elongation factor for multistranded TJP1/ZO1 condensates that form a tight junction belt, thereby required for the formation of the tight junction-mediated cell barrier. Positively regulates epithelial cell microtubule elongation and cell migration, possibly via facilitating localization of PRKCI/aPKC and PAR3D/PAR3 at the leading edge of migrating cells. Plays a role in the correct reorientation of the microtubule-organizing center during epithelial migration. May regulate the surface expression and/or function of ASIC3 in sensory neurons. May recruit ARHGEF18 to apical cell-cell boundaries. The sequence is that of InaD-like protein from Rattus norvegicus (Rat).